A 752-amino-acid chain; its full sequence is Protein SEY1 homolog 1 (752 aa).

Over Met-1–Asn-674 the chain is Cytoplasmic. Residues Gly-40 to Met-265 enclose the GB1/RHD3-type G domain. Gly-50–Ser-57 provides a ligand contact to GTP. Positions Asn-445–Ile-465 form a coiled coil. A helical transmembrane segment spans residues Ile-675–Met-695. Residues Gly-696–Pro-698 are Lumenal-facing. The chain crosses the membrane as a helical span at residues Leu-699–Leu-719. Over His-720–Ser-752 the chain is Cytoplasmic.

This sequence belongs to the TRAFAC class dynamin-like GTPase superfamily. GB1/RHD3 GTPase family. RHD3 subfamily.

It is found in the endoplasmic reticulum membrane. Functionally, probable GTP-binding protein that may be involved in cell development. This is Protein SEY1 homolog 1 from Paramecium tetraurelia.